An 85-amino-acid chain; its full sequence is Latartoxin-1a (85 aa).

An N-terminal signal peptide occupies residues 1–19; it reads MKVLVFAIVCSVLLQVVLS. Positions 20 to 25 are cleaved as a propeptide — removed in mature form; that stretch reads ADEEAR. The Processing quadruplet motif motif lies at 22–25; sequence EEAR. 4 disulfide bridges follow: Cys-27/Cys-42, Cys-34/Cys-47, Cys-41/Cys-64, and Cys-49/Cys-62.

Belongs to the neurotoxin 19 (CSTX) family. In terms of processing, contains 4 disulfide bonds. Post-translationally, cleavage of the propeptide depends on the processing quadruplet motif (XXXR, with at least one of X being E). In terms of tissue distribution, expressed by the venom gland.

It is found in the secreted. Insect toxin. Causes paralysis in larvae of C.vicina by depolarizing membranes at the neuromuscular junction. The chain is Latartoxin-1a from Lachesana tarabaevi (Spider).